Consider the following 529-residue polypeptide: ATP synthase F(1) complex catalytic subunit beta, mitochondrial (529 aa).

Residues 1–46 (MLSLVGRVASASASGALRGLSPSAALPQAQLLLRAAPAGVHPARDY) constitute a mitochondrion transit peptide. O-linked (GlcNAc) serine glycosylation is present at Ser-106. N6-acetyllysine; alternate occurs at positions 124, 133, and 161. 3 positions are modified to N6-succinyllysine; alternate: Lys-124, Lys-133, and Lys-161. An N6-acetyllysine modification is found at Lys-198. ADP contacts are provided by Gly-209, Val-210, Gly-211, Lys-212, Thr-213, and Val-214. An ATP-binding site is contributed by Gly-209. Phosphate contacts are provided by Gly-209, Val-210, Gly-211, Lys-212, and Thr-213. Residues Gly-211, Lys-212, Thr-213, and Val-214 each contribute to the ATP site. Residue Thr-213 coordinates Mg(2+). Residue Glu-238 participates in Mg(2+) binding. Arg-239 contacts ATP. Lys-259 and Lys-264 each carry N6-acetyllysine; alternate. N6-succinyllysine; alternate occurs at positions 259 and 264. Thr-312 carries the post-translational modification Phosphothreonine. Lys-426 bears the N6-acetyllysine mark. At Ser-433 the chain carries Phosphoserine. 2 positions are modified to N6-acetyllysine: Lys-480 and Lys-485. Lys-522 bears the N6-acetyllysine; alternate mark. Lys-522 is modified (N6-succinyllysine; alternate). Position 529 is a phosphoserine (Ser-529).

It belongs to the ATPase alpha/beta chains family. In terms of assembly, homotrimer. Component of the ATP synthase complex composed at least of ATP5F1A/subunit alpha, ATP5F1B/subunit beta, ATP5MC1/subunit c (homooctomer), MT-ATP6/subunit a, MT-ATP8/subunit 8, ATP5ME/subunit e, ATP5MF/subunit f, ATP5MG/subunit g, ATP5MK/subunit k, ATP5MJ/subunit j, ATP5F1C/subunit gamma, ATP5F1D/subunit delta, ATP5F1E/subunit epsilon, ATP5PF/subunit F6, ATP5PB/subunit b, ATP5PD/subunit d, ATP5PO/subunit OSCP. ATP synthase complex consists of a soluble F(1) head domain (subunits alpha(3) and beta(3)) - the catalytic core - and a membrane F(0) domain - the membrane proton channel (subunits c, a, 8, e, f, g, k and j). These two domains are linked by a central stalk (subunits gamma, delta, and epsilon) rotating inside the F1 region and a stationary peripheral stalk (subunits F6, b, d, and OSCP). Interacts with PPIF. Interacts with BCL2L1 isoform BCL-X(L); the interaction mediates the association of BCL2L1 isoform BCL-X(L) with the mitochondrial membrane F(1)F(0) ATP synthase and enhances neurons metabolic efficiency. Interacts with CLN5 and PPT1. Interacts with S100A1; this interaction increases F1-ATPase activity. Interacts with MTLN. Interacts with TTC5/STRAP; the interaction results in decreased mitochondrial ATP production. Acetylation of Lys-133 is observed in liver mitochondria from fasted mice but not from fed mice.

It is found in the mitochondrion inner membrane. The enzyme catalyses ATP + H2O + 4 H(+)(in) = ADP + phosphate + 5 H(+)(out). Catalytic subunit beta, of the mitochondrial membrane ATP synthase complex (F(1)F(0) ATP synthase or Complex V) that produces ATP from ADP in the presence of a proton gradient across the membrane which is generated by electron transport complexes of the respiratory chain. ATP synthase complex consist of a soluble F(1) head domain - the catalytic core - and a membrane F(1) domain - the membrane proton channel. These two domains are linked by a central stalk rotating inside the F(1) region and a stationary peripheral stalk. During catalysis, ATP synthesis in the catalytic domain of F(1) is coupled via a rotary mechanism of the central stalk subunits to proton translocation. In vivo, can only synthesize ATP although its ATP hydrolase activity can be activated artificially in vitro. With the subunit alpha (ATP5F1A), forms the catalytic core in the F(1) domain. The protein is ATP synthase F(1) complex catalytic subunit beta, mitochondrial of Mus musculus (Mouse).